Reading from the N-terminus, the 561-residue chain is Acyl-CoA ligase ppsA (561 aa).

A glycan (N-linked (GlcNAc...) asparagine) is linked at Asn-21. Residues 71–91 (SILYPALFLAIVGVGAVYMGA) traverse the membrane as a helical segment. Residue 203–214 (MFATSGTSGLPK) participates in AMP binding. N-linked (GlcNAc...) asparagine glycosylation is present at Asn-396. Residues 462 to 540 (ELEAELAQHP…DSIPRNSGGK (79 aa)) form an AMP-binding region.

It belongs to the ATP-dependent AMP-binding enzyme family.

The protein resides in the membrane. It carries out the reaction acetate + ATP + CoA = acetyl-CoA + ADP + phosphate. The enzyme catalyses propanoate + ATP + CoA = propanoyl-CoA + AMP + diphosphate. It functions in the pathway secondary metabolite biosynthesis. Functionally, acyl-CoA ligase; part of the gene cluster that mediates the biosynthesis of 2,4'-dihydroxy-3'-methoxypropiophenone. The first step of the pathway is the conversion of acetate into acetyl-CoA by the acyl-CoA ligase ppsA. Acetyl-CoA is then used as a starter unit by the polyketide synthase ppsB and condensed with 4 malonyl-CoA unit to produce the pentaketide backbone. During polyketide extension, the polykedite chain is probably reduced and dehydrated by the KR and PT domains, respectively. O-methylation seems to be catalyzed by an unknown methyltransferase rather than by the CMeT domain of ppsB. Two hydroxylations and one further decarboxylation step catalyzed by yet unknown enzymes are then required to yield 4'-hydroxy-3'-methoxypropiophenone. PpsC functions as a carrier protein to transport 4'-hydroxy-3'-methoxypropiophenone to a specific cell compartment in which 4'-hydroxy-3'-methoxypropiophenone is hydroxylated to 2,4'-dihydroxy-3'-methoxypropiophenone by a still to be identified enzyme. The protein is Acyl-CoA ligase ppsA of Aspergillus oryzae (strain ATCC 42149 / RIB 40) (Yellow koji mold).